Here is a 389-residue protein sequence, read N- to C-terminus: Lipid-A-disaccharide synthase (389 aa).

This sequence belongs to the LpxB family.

The catalysed reaction is a lipid X + a UDP-2-N,3-O-bis[(3R)-3-hydroxyacyl]-alpha-D-glucosamine = a lipid A disaccharide + UDP + H(+). Its pathway is bacterial outer membrane biogenesis; LPS lipid A biosynthesis. In terms of biological role, condensation of UDP-2,3-diacylglucosamine and 2,3-diacylglucosamine-1-phosphate to form lipid A disaccharide, a precursor of lipid A, a phosphorylated glycolipid that anchors the lipopolysaccharide to the outer membrane of the cell. This is Lipid-A-disaccharide synthase from Paraburkholderia phymatum (strain DSM 17167 / CIP 108236 / LMG 21445 / STM815) (Burkholderia phymatum).